We begin with the raw amino-acid sequence, 525 residues long: Mitochondrial-processing peptidase subunit alpha (525 aa).

The N-terminal 33 residues, M1–F33, are a transit peptide targeting the mitochondrion. N6-succinyllysine is present on K64. Position 299 is an N6-acetyllysine (K299).

It belongs to the peptidase M16 family. As to quaternary structure, heterodimer of PMPCA (alpha) and PMPCB (beta) subunits, forming the mitochondrial processing protease (MPP) in which PMPCA is involved in substrate recognition and binding and PMPCB is the catalytic subunit.

It localises to the mitochondrion matrix. Its subcellular location is the mitochondrion inner membrane. Its function is as follows. Substrate recognition and binding subunit of the essential mitochondrial processing protease (MPP), which cleaves the mitochondrial sequence off newly imported precursors proteins. The protein is Mitochondrial-processing peptidase subunit alpha (PMPCA) of Pongo abelii (Sumatran orangutan).